A 176-amino-acid polypeptide reads, in one-letter code: Peptide methionine sulfoxide reductase B3 (176 aa).

The N-terminal stretch at 1 to 26 is a signal peptide; it reads MNIVNSKILFLSFTLLLLLQSSIVES. A MsrB domain is found at 51-172; the sequence is DEEWRAILSP…NSVSLKFTPA (122 aa). Zn(2+)-binding residues include Cys90, Cys93, Cys136, and Cys139. Cys108 and Cys161 form a disulfide bridge. Cys161 functions as the Nucleophile in the catalytic mechanism.

The protein belongs to the MsrB Met sulfoxide reductase family. Requires Zn(2+) as cofactor.

The protein localises to the endoplasmic reticulum. It catalyses the reaction L-methionyl-[protein] + [thioredoxin]-disulfide + H2O = L-methionyl-(R)-S-oxide-[protein] + [thioredoxin]-dithiol. In terms of biological role, catalyzes the reduction of methionine sulfoxide (MetSO) to methionine in proteins. Plays a protective role against oxidative stress by restoring activity to proteins that have been inactivated by methionine oxidation. Involved in cold tolerance. Eliminates MetSO and reactive oxygen species that accumulate at the ER during cold acclimation. MSRB family specifically reduces the MetSO R-enantiomer. The sequence is that of Peptide methionine sulfoxide reductase B3 (MSRB3) from Arabidopsis thaliana (Mouse-ear cress).